Consider the following 1075-residue polypeptide: MLRNGNEGMSTIPGFSQIQFEGFCRFINQGLAEELEKFPTIKDPDHEIAFQLFAKGYQLLEPSIKERNAVYESLTYSSELYVSARLIFGFDVQKQTISIGNIPIMNSLGTFIINGIYRIVINQILLSPGIYYRSELDHKGISICTGTIISDWGGRLELAIDKKERIWARVSRKQKISILVLLSAMGLNLREILDNVSYPEIFLSFLNAKEKKRIESKEKAILEFYQQFACVGGDLVFSESLCEELQKKFFQQKCELGRVGRRNMNRRLNLDIPQNNTFLLPRDVLAATDHLIGMKFGTGILDDDDMNHLKNKRIRSVADLLQDQFGLALGRLQHAVQKTIRRVFIRQSKPTPQTLVTPTSTSILLITTYETFFGTYPLAQVFDQTNPLTQTVHGRKVSCLGPGGLTGRTASFRSRDIHPSHYGRICPIDTSEGINVGLTGSLAIHARIDHWWGSIESPFYEISEKAKEKKERQVVYLSPNRDEYYMIAAGNSLSLNQGIQEEQVVPARYRQEFLTIAWEQIHVRSIFPFQYFSIGGSLIPFIEHNDANRALMSSNMQRQAVPLSRSEKCIVGTGLERQTALDSRVSVIAEREGKIISSDSHKILLSSSGKTISIPLVAHRRSNKNTCMHQKPRVPRGKSIKKGQILAEGAATVGGELALGKNVLVAYMPWEGYNFEDAVLISERLVYEDIYTSFHIRKYEIQTDTTSQGSAEKITKQIPHLEEHLLRNLDRNGVVRLGSWVETGDILVGKLTPQIASESSYIAEAGLLRAIFGLEVSTSKETSLKLPIGGRGRVIDVKWIQRDPFDIMVRVYILQKREIKVGDKVAGRHGNKGIISKILPRQDMPYLQDGTPVDMVFNPLGVPSRMNVGQIFESSLGLAGDLLKKHYRIAPFDERYEQEASRKLVFSELYEASKQTKNPWVFEPEYPGKSRIFDGRTGDPFEQPVLIGKSYILKLIHQVDEKIHGRSTGPYSLVTQQPVRGRAKQGGQRIGEMEVWALEGFGVAHILQEILTYKSDHLIARQEILNATIWGKRVPNHEDPPESFRVLVRELRSLALELNHFLVSEKNFRVNREDV.

Belongs to the RNA polymerase beta chain family. As to quaternary structure, in plastids the minimal PEP RNA polymerase catalytic core is composed of four subunits: alpha, beta, beta', and beta''. When a (nuclear-encoded) sigma factor is associated with the core the holoenzyme is formed, which can initiate transcription.

Its subcellular location is the plastid. It is found in the chloroplast. The enzyme catalyses RNA(n) + a ribonucleoside 5'-triphosphate = RNA(n+1) + diphosphate. DNA-dependent RNA polymerase catalyzes the transcription of DNA into RNA using the four ribonucleoside triphosphates as substrates. The protein is DNA-directed RNA polymerase subunit beta of Saccharum hybrid (Sugarcane).